Reading from the N-terminus, the 149-residue chain is Myoglobin (149 aa).

The residue at position 2 (Val2) is an N-acetylvaline. Positions 2–143 (VDWEKVNSVW…ICSDIEKEYK (142 aa)) constitute a Globin domain. His89 contacts heme b.

It belongs to the globin family. In terms of assembly, monomeric.

It localises to the cytoplasm. The protein resides in the sarcoplasm. It catalyses the reaction Fe(III)-heme b-[protein] + nitric oxide + H2O = Fe(II)-heme b-[protein] + nitrite + 2 H(+). The enzyme catalyses H2O2 + AH2 = A + 2 H2O. In terms of biological role, monomeric heme protein which primary function is to store oxygen and facilitate its diffusion within muscle tissues. Reversibly binds oxygen through a pentacoordinated heme iron and enables its timely and efficient release as needed during periods of heightened demand. Depending on the oxidative conditions of tissues and cells, and in addition to its ability to bind oxygen, it also has a nitrite reductase activity whereby it regulates the production of bioactive nitric oxide. Under stress conditions, like hypoxia and anoxia, it also protects cells against reactive oxygen species thanks to its pseudoperoxidase activity. In Mustelus antarcticus (Gummy shark), this protein is Myoglobin (mb).